The chain runs to 475 residues: uncharacterized protein (475 aa).

The chain crosses the membrane as a helical span at residues 19–39 (LVSAILILSILIWLIITIFFA).

Its subcellular location is the membrane. This is an uncharacterized protein from Mycoplasma pneumoniae (strain ATCC 29342 / M129 / Subtype 1) (Mycoplasmoides pneumoniae).